The sequence spans 468 residues: Interstitial collagenase (468 aa).

A signal peptide spans 1–18 (MPGLPLLLLLLWGVGSHG). Positions 19-98 (FPAASETQEQ…PRCGVPDVAQ (80 aa)) are cleaved as a propeptide — activation peptide. A Cysteine switch motif is present at residues 89–96 (PRCGVPDV). Position 91 (Cys91) interacts with Zn(2+). Residue Asn119 is glycosylated (N-linked (GlcNAc...) asparagine). The Ca(2+) site is built by Asp123 and Asp157. Zn(2+) is bound by residues His167 and Asp169. 4 residues coordinate Ca(2+): Asp174, Gly175, Glu177, and Gln179. His182 is a Zn(2+) binding site. Ca(2+) contacts are provided by Gly189, Gly191, and Asp193. His195 provides a ligand contact to Zn(2+). The Ca(2+) site is built by Asp197, Glu198, and Asp200. Residue His217 coordinates Zn(2+). Glu218 is a catalytic residue. Zn(2+)-binding residues include His221 and His227. At Thr273 the chain carries Phosphothreonine. Hemopexin repeat units lie at residues 274-323 (PKVC…WPHL), 324-370 (PNGL…FGFP), 373-421 (VNHI…FPGI), and 422-465 (GNKV…WFNC). Cys277 and Cys465 are oxidised to a cystine. Asp284 and Gln328 together coordinate Ca(2+). Position 359 is a phosphotyrosine; by PKDCC (Tyr359). Ca(2+)-binding residues include Asp377 and Asp426.

It belongs to the peptidase M10A family. It depends on Ca(2+) as a cofactor. Zn(2+) serves as cofactor. In terms of processing, tyrosine phosphorylated in platelets by PKDCC/VLK.

It is found in the secreted. The protein resides in the extracellular space. Its subcellular location is the extracellular matrix. It catalyses the reaction Cleavage of the triple helix of collagen at about three-quarters of the length of the molecule from the N-terminus, at 775-Gly-|-Ile-776 in the alpha1(I) chain. Cleaves synthetic substrates and alpha-macroglobulins at bonds where P1' is a hydrophobic residue.. Can be activated without removal of the activation peptide. In terms of biological role, cleaves collagens of types I, II, and III at one site in the helical domain. Also cleaves collagens of types VII and X. This chain is Interstitial collagenase (MMP1), found in Oryctolagus cuniculus (Rabbit).